Reading from the N-terminus, the 106-residue chain is uncharacterized protein (106 aa).

The HTH hxlR-type domain maps to 1–93 (MSIFYVLGKK…WEAKWKEAKI (93 aa)).

This is an uncharacterized protein from Methanocaldococcus jannaschii (strain ATCC 43067 / DSM 2661 / JAL-1 / JCM 10045 / NBRC 100440) (Methanococcus jannaschii).